Consider the following 280-residue polypeptide: uncharacterized protein (280 aa).

The N-terminal stretch at 1 to 35 (MQGQVLKKVLKKYVHIGMCTLFLHAILLFPCVAQA) is a signal peptide.

This is an uncharacterized protein from Treponema pallidum (strain Nichols).